Here is a 2427-residue protein sequence, read N- to C-terminus: Interferon-induced very large GTPase 1 (2427 aa).

In terms of domain architecture, VLIG-type G spans 1485–1726; sequence DKRLFVLSVL…KISDFKFRVQ (242 aa). GTP is bound by residues 1495–1502, 1548–1551, and 1625–1628; these read GLQSSGKS, DTEG, and TAKD.

This sequence belongs to the TRAFAC class dynamin-like GTPase superfamily. Very large inducible GTPase (VLIG) family. Widely expressed. Expressed at low basal level in lung, heart, thymus and spleen; at still lower level in liver, ovary, kidney and brain. Expressed at very weak level in testis. Undetectable in embryo.

The protein resides in the cytoplasm. Its subcellular location is the cytosol. It is found in the nucleus. The protein is Interferon-induced very large GTPase 1 (Gvin1) of Mus musculus (Mouse).